We begin with the raw amino-acid sequence, 192 residues long: Thymidine kinase (192 aa).

Residues 9-16 and 87-90 each bind ATP; these read STMNAGKS and DEAQ. Glu-88 (proton acceptor) is an active-site residue. Zn(2+) is bound by residues Cys-145, Cys-147, Cys-182, and His-185.

The protein belongs to the thymidine kinase family. As to quaternary structure, homotetramer.

The protein localises to the cytoplasm. The enzyme catalyses thymidine + ATP = dTMP + ADP + H(+). This chain is Thymidine kinase, found in Pasteurella multocida (strain Pm70).